Here is a 312-residue protein sequence, read N- to C-terminus: MKKELIIGTRSSPLALWQAEFTKAELSRHFPELNITLKLVKTTGDVLLDSPLSKIGDMGLFTKDIEKHLLAKEIDLAVHSLKDVPTGTPEGLVISSFTKREDTRDVIISKSGKGLKDLPPNARMATSSLRRMSQLLSMRPDLQILDIRGNLNTRFKKFDDGEFDAMMLAYAGVYRLEFSDRISEILPHDVMLPAVGQGALGIETRTDDAETIEIVRVMNDSNTEICCRAERALLRHLQGGCQIPIGCYGSYISGTLKLLAFVGSVDGKTALRNELTKPVNTPEEAEAVGIELAEVLLSMGAEKILADIRKTR.

Cysteine 241 bears the S-(dipyrrolylmethanemethyl)cysteine mark.

This sequence belongs to the HMBS family. Monomer. Requires dipyrromethane as cofactor.

The enzyme catalyses 4 porphobilinogen + H2O = hydroxymethylbilane + 4 NH4(+). The protein operates within porphyrin-containing compound metabolism; protoporphyrin-IX biosynthesis; coproporphyrinogen-III from 5-aminolevulinate: step 2/4. It participates in porphyrin-containing compound metabolism; chlorophyll biosynthesis. Its function is as follows. Tetrapolymerization of the monopyrrole PBG into the hydroxymethylbilane pre-uroporphyrinogen in several discrete steps. This chain is Porphobilinogen deaminase, found in Chlorobaculum tepidum (strain ATCC 49652 / DSM 12025 / NBRC 103806 / TLS) (Chlorobium tepidum).